A 321-amino-acid polypeptide reads, in one-letter code: Aldose reductase C (321 aa).

22-31 contributes to the NADP(+) binding site; sequence GNQIPSIGLG. Y62 acts as the Proton donor in catalysis. A substrate-binding site is contributed by H124. NADP(+) is bound at residue 227–281; it reads SPLGQGKCDFFSNKILKSIAGKYKKSVANVIFKWLNQRGIAAIPKSGNHSRIIEN.

This sequence belongs to the aldo/keto reductase family.

The enzyme catalyses an alditol + NAD(+) = an aldose + NADH + H(+). The catalysed reaction is an alditol + NADP(+) = an aldose + NADPH + H(+). Its function is as follows. Catalyzes the NADPH-dependent reduction of a wide variety of carbonyl-containing compounds to their corresponding alcohols with a broad range of catalytic efficiencies. The chain is Aldose reductase C (alrC) from Dictyostelium discoideum (Social amoeba).